The sequence spans 187 residues: Ubiquinone biosynthesis protein COQ4 homolog, mitochondrial (187 aa).

Zn(2+)-binding residues include histidine 77, aspartate 78, histidine 81, and glutamate 93.

Belongs to the COQ4 family. As to quaternary structure, component of a multi-subunit COQ enzyme complex. Zn(2+) is required as a cofactor.

It localises to the mitochondrion inner membrane. The catalysed reaction is a 4-hydroxy-3-methoxy-5-(all-trans-polyprenyl)benzoate + H(+) = a 2-methoxy-6-(all-trans-polyprenyl)phenol + CO2. The protein operates within cofactor biosynthesis; ubiquinone biosynthesis. In terms of biological role, lyase that catalyzes the C1-decarboxylation of 4-hydroxy-3-methoxy-5-(all-trans-polyprenyl)benzoic acid into 2-methoxy-6-(all-trans-polyprenyl)phenol during ubiquinone biosynthesis. The polypeptide is Ubiquinone biosynthesis protein COQ4 homolog, mitochondrial (Leishmania infantum).